A 545-amino-acid chain; its full sequence is CTP synthase (545 aa).

The segment at 1-266 is amidoligase domain; that stretch reads MITNYIFVTG…DQYICDKFNL (266 aa). Ser-14 is a CTP binding site. Ser-14 serves as a coordination point for UTP. Residues 15–20 and Asp-72 contribute to the ATP site; that span reads SLGKGI. Mg(2+) is bound by residues Asp-72 and Glu-140. Residues 147–149, 187–192, and Lys-223 each bind CTP; these read DIE and KTKPTQ. UTP is bound by residues 187-192 and Lys-223; that span reads KTKPTQ. ATP is bound at residue 239–241; the sequence is KDV. Residues 291–542 enclose the Glutamine amidotransferase type-1 domain; it reads SIGMVGKYIE…VKSALAHHQD (252 aa). Gly-352 is an L-glutamine binding site. The Nucleophile; for glutamine hydrolysis role is filled by Cys-379. L-glutamine-binding positions include 380 to 383, Glu-403, and Arg-470; that span reads LGMQ. Residues His-515 and Glu-517 contribute to the active site.

Belongs to the CTP synthase family. As to quaternary structure, homotetramer.

The enzyme catalyses UTP + L-glutamine + ATP + H2O = CTP + L-glutamate + ADP + phosphate + 2 H(+). The catalysed reaction is L-glutamine + H2O = L-glutamate + NH4(+). It catalyses the reaction UTP + NH4(+) + ATP = CTP + ADP + phosphate + 2 H(+). It functions in the pathway pyrimidine metabolism; CTP biosynthesis via de novo pathway; CTP from UDP: step 2/2. With respect to regulation, allosterically activated by GTP, when glutamine is the substrate; GTP has no effect on the reaction when ammonia is the substrate. The allosteric effector GTP functions by stabilizing the protein conformation that binds the tetrahedral intermediate(s) formed during glutamine hydrolysis. Inhibited by the product CTP, via allosteric rather than competitive inhibition. Its function is as follows. Catalyzes the ATP-dependent amination of UTP to CTP with either L-glutamine or ammonia as the source of nitrogen. Regulates intracellular CTP levels through interactions with the four ribonucleotide triphosphates. In Hamiltonella defensa subsp. Acyrthosiphon pisum (strain 5AT), this protein is CTP synthase.